Consider the following 344-residue polypeptide: Prickle-like protein 4 (344 aa).

The PET domain occupies 1-81; sequence MSPQGPAVLS…ARLVLPKLEG (81 aa). LIM zinc-binding domains follow at residues 82–147 and 148–207; these read HTCE…LLRP and RCPA…RYSD. The tract at residues 253-344 is disordered; the sequence is GSSLQTQRGL…NASKTHCTMC (92 aa). Residues 257–271 are compositionally biased toward polar residues; sequence QTQRGLPGSSPQQEN. Positions 272 to 296 are enriched in basic and acidic residues; the sequence is RPGDKAEAPKGQEQCRLETIRDPKD. Residues 322–344 show a composition bias toward polar residues; sequence SWKTPGSLQAEDSNASKTHCTMC.

It belongs to the prickle / espinas / testin family. Expressed in a broad range of normal tissues as well as in hepatocellular carcinoma, breast cancer and prostate cancer tissues.

This is Prickle-like protein 4 (PRICKLE4) from Homo sapiens (Human).